Reading from the N-terminus, the 98-residue chain is Co-chaperonin GroES (98 aa).

The protein belongs to the GroES chaperonin family. Heptamer of 7 subunits arranged in a ring. Interacts with the chaperonin GroEL.

The protein resides in the cytoplasm. Its function is as follows. Together with the chaperonin GroEL, plays an essential role in assisting protein folding. The GroEL-GroES system forms a nano-cage that allows encapsulation of the non-native substrate proteins and provides a physical environment optimized to promote and accelerate protein folding. GroES binds to the apical surface of the GroEL ring, thereby capping the opening of the GroEL channel. The protein is Co-chaperonin GroES of Renibacterium salmoninarum (strain ATCC 33209 / DSM 20767 / JCM 11484 / NBRC 15589 / NCIMB 2235).